A 476-amino-acid polypeptide reads, in one-letter code: Glycogen synthase (476 aa).

Residue Lys-15 participates in ADP-alpha-D-glucose binding.

This sequence belongs to the glycosyltransferase 1 family. Bacterial/plant glycogen synthase subfamily.

The catalysed reaction is [(1-&gt;4)-alpha-D-glucosyl](n) + ADP-alpha-D-glucose = [(1-&gt;4)-alpha-D-glucosyl](n+1) + ADP + H(+). It functions in the pathway glycan biosynthesis; glycogen biosynthesis. Functionally, synthesizes alpha-1,4-glucan chains using ADP-glucose. This is Glycogen synthase from Mycoplasma mobile (strain ATCC 43663 / 163K / NCTC 11711) (Mesomycoplasma mobile).